A 2103-amino-acid chain; its full sequence is Orsellinic acid synthase (2103 aa).

An N-terminal acylcarrier protein transacylase domain (SAT) region spans residues 17–232 (DAVHDLNVRS…KRPELAHATI (216 aa)). The Ketosynthase family 3 (KS3) domain occupies 348–782 (ADAIAVVGMS…GGNVSMLLQD (435 aa)). Residues C525, H660, and H702 each act as for beta-ketoacyl synthase activity in the active site. Residues 881 to 1197 (VFTFTGQGAQ…RRGGDDWQSV (317 aa)) are malonyl-CoA:ACP transacylase (MAT) domain. Residue S973 is the For acyl/malonyl transferase activity of the active site. Residues 1272 to 1409 (HAVEKLQREE…GQPDSAVRRD (138 aa)) are N-terminal hotdog fold. In terms of domain architecture, PKS/mFAS DH spans 1272 to 1582 (HAVEKLQREE…FKKLERDFFA (311 aa)). A product template (PT) domain region spans residues 1303-1579 (GHVVDESAIC…DICFKKLERD (277 aa)). H1304 functions as the Proton acceptor; for dehydratase activity in the catalytic mechanism. The interval 1433–1582 (VHAMDTALFY…FKKLERDFFA (150 aa)) is C-terminal hotdog fold. The Proton donor; for dehydratase activity role is filled by D1493. The disordered stretch occupies residues 1592–1638 (STKPVAAAPAKSMAKRARQLAPSPSPSSSSGSNTPMSRSPTPSSVSD). 2 stretches are compositionally biased toward low complexity: residues 1594–1603 (KPVAAAPAKS) and 1617–1631 (PSSSSGSNTPMSRSP). 2 Carrier domains span residues 1640-1716 (VDLG…GGSA) and 1741-1815 (PAPS…DDDA). At S1676 the chain carries O-(pantetheine 4'-phosphoryl)serine. Residues 1722–1743 (EDITKPTPSPEQTQARKQGPAP) form a disordered region. O-(pantetheine 4'-phosphoryl)serine is present on S1775. Residues 1809–1838 (EALDDDAEEESAPAQTSTNPAKETTIDSSR) form a disordered region. Residues 1810–1819 (ALDDDAEEES) show a composition bias toward acidic residues. The span at 1823-1836 (QTSTNPAKETTIDS) shows a compositional bias: polar residues. The tract at residues 1849-2082 (ASYIHLKALP…TVNGDHFSMM (234 aa)) is thioesterase (TE) domain.

It catalyses the reaction 3 malonyl-CoA + acetyl-CoA + 2 H(+) = orsellinate + 3 CO2 + 4 CoA. It functions in the pathway secondary metabolite biosynthesis. Functionally, non-reducing polyketide synthase; part of the gene cluster that mediates the biosynthesis of orsellinic acid, as well as of the cathepsin K inhibitors F9775 A and F9775 B. The non-reducing polyketide synthase orsA produces orsellinic acid by condensing acetyl-CoA with 3 malonyl-CoA units. Further modifications by the decarboxylase orsB and the tyrosinase-like protein orsC lead to the production of F9775 A and F9775 B. The functions of orsD and orsE remain unclear since only orsB and orsC are required to convert orsellinic acid into F9775 A and F9775 B. The protein is Orsellinic acid synthase of Emericella nidulans (strain FGSC A4 / ATCC 38163 / CBS 112.46 / NRRL 194 / M139) (Aspergillus nidulans).